Consider the following 462-residue polypeptide: Putative ABC transporter A445L (462 aa).

It belongs to the protein kinase superfamily. ADCK protein kinase family.

This is Putative ABC transporter A445L from Chlorella (PBCV-1).